The sequence spans 386 residues: Heat-inducible transcription repressor HrcA (386 aa).

Belongs to the HrcA family.

In terms of biological role, negative regulator of class I heat shock genes (grpE-dnaK-dnaJ and groELS operons). Prevents heat-shock induction of these operons. The polypeptide is Heat-inducible transcription repressor HrcA (Chlamydia caviae (strain ATCC VR-813 / DSM 19441 / 03DC25 / GPIC) (Chlamydophila caviae)).